A 24-amino-acid polypeptide reads, in one-letter code: Brevinin-1SPc (24 aa).

Cys18 and Cys24 are oxidised to a cystine.

As to expression, expressed by the skin glands.

It is found in the secreted. Functionally, antimicrobial peptide with activity against Gram-negative and Gram-positive bacteria and fungi. Also shows hemolytic activity. The protein is Brevinin-1SPc of Lithobates septentrionalis (Mink frog).